The primary structure comprises 373 residues: D-alanine--D-alanine ligase (373 aa).

The ATP-grasp domain maps to 165 to 369 (KRLAREAGIP…FGDLVSALIA (205 aa)). 192–247 (KERLGLPVFVKPARGGSSIGISKVDSWEEFDAAIDLAFSNDNKVIVEAMIHGAEVE) lines the ATP pocket. D324, E336, and N338 together coordinate Mg(2+).

This sequence belongs to the D-alanine--D-alanine ligase family. Requires Mg(2+) as cofactor. Mn(2+) serves as cofactor.

It localises to the cytoplasm. The enzyme catalyses 2 D-alanine + ATP = D-alanyl-D-alanine + ADP + phosphate + H(+). It functions in the pathway cell wall biogenesis; peptidoglycan biosynthesis. Cell wall formation. This is D-alanine--D-alanine ligase from Corynebacterium jeikeium (strain K411).